The primary structure comprises 374 residues: UPF0496 protein At3g28270 (374 aa).

Positions 171-210 (KVLTTQFERIKKQQESLLEEVSETRKKIQDEISNLEKKTL) form a coiled coil. A run of 2 helical transmembrane segments spans residues 214–234 (VVFG…IATG) and 235–255 (VGAA…GWAG). Residues 256 to 321 (VYTTLDKKKD…MLKLVDNAID (66 aa)) are a coiled coil.

The protein belongs to the UPF0496 family.

It is found in the membrane. The polypeptide is UPF0496 protein At3g28270 (Arabidopsis thaliana (Mouse-ear cress)).